A 154-amino-acid polypeptide reads, in one-letter code: 3-dehydroquinate dehydratase (154 aa).

Tyr22 acts as the Proton acceptor in catalysis. Substrate contacts are provided by Asn73, His79, and Asp86. His99 functions as the Proton donor in the catalytic mechanism. Residues 100–101 (LS) and Arg110 each bind substrate.

This sequence belongs to the type-II 3-dehydroquinase family. As to quaternary structure, homododecamer.

The enzyme catalyses 3-dehydroquinate = 3-dehydroshikimate + H2O. The protein operates within metabolic intermediate biosynthesis; chorismate biosynthesis; chorismate from D-erythrose 4-phosphate and phosphoenolpyruvate: step 3/7. Its function is as follows. Catalyzes a trans-dehydration via an enolate intermediate. The sequence is that of 3-dehydroquinate dehydratase from Carboxydothermus hydrogenoformans (strain ATCC BAA-161 / DSM 6008 / Z-2901).